The following is a 91-amino-acid chain: DNA-binding protein HU (91 aa).

The protein belongs to the bacterial histone-like protein family. Homodimer.

Functionally, histone-like DNA-binding protein which is capable of wrapping DNA to stabilize it, and thus to prevent its denaturation under extreme environmental conditions. The protein is DNA-binding protein HU (hup) of Lactococcus lactis subsp. lactis (strain IL1403) (Streptococcus lactis).